We begin with the raw amino-acid sequence, 356 residues long: Cyanuric acid amidohydrolase (356 aa).

Residues 1–99 are RU A; that stretch reads MPIAKVHRIA…FLVFERAEGN (99 aa). Residues R52 and 79–80 contribute to the substrate site; that span reads SG. The RU B stretch occupies residues 106–243; it reads ALAIGRAHTP…HEIVVLGMSE (138 aa). Residue K156 is part of the active site. Substrate is bound by residues R188 and 226 to 227; that span reads SS. The Nucleophile role is filled by S226. The segment at 249 to 356 is RU C; the sequence is LAIAHGVMAD…VAVIAARTMG (108 aa). E287 provides a ligand contact to Mg(2+). Substrate contacts are provided by residues R314 and 333 to 334; that span reads SG. 5 residues coordinate Mg(2+): G336, Q339, G340, P341, and G344.

This sequence belongs to the cyclic amide hydrolase (CyAH) family. Homotetramer.

The enzyme catalyses cyanurate + H2O = 1-carboxybiuret + H(+). The protein operates within xenobiotic degradation; atrazine degradation; biuret from cyanurate: step 1/1. Inhibited by barbituric acid. Its function is as follows. Responsible for the hydrolysis of cyanuric acid, an intermediate formed during catabolism of s-triazine based compounds in herbicides such as atrazine and polymers such as melamine. Catalyzes the hydrolytic opening of the s-triazine ring of cyanuric acid (2,4,6-trihydroxy-s-triazine) to yield carbon dioxide and carboxybiuret, which spontaneously decarboxylates to biuret. The polypeptide is Cyanuric acid amidohydrolase (Azorhizobium caulinodans (strain ATCC 43989 / DSM 5975 / JCM 20966 / LMG 6465 / NBRC 14845 / NCIMB 13405 / ORS 571)).